Reading from the N-terminus, the 178-residue chain is Probable major fimbrial subunit LpfA (178 aa).

A signal peptide spans 1–24 (MEFFMKKVVFALTALALTSGTVFA).

This sequence belongs to the fimbrial protein family.

The protein localises to the fimbrium. In terms of biological role, part of the lpfABCC'DE fimbrial operon. LP fimbriae may participate in the interaction with eukaryotic cells by assisting in microcolony formation. The protein is Probable major fimbrial subunit LpfA (lpfA) of Escherichia coli O157:H7.